The following is a 188-amino-acid chain: ATP synthase subunit b 2 (188 aa).

Residues 41–61 (FFWLVISFGFFYFFIARVIVP) traverse the membrane as a helical segment.

This sequence belongs to the ATPase B chain family. In terms of assembly, F-type ATPases have 2 components, F(1) - the catalytic core - and F(0) - the membrane proton channel. F(1) has five subunits: alpha(3), beta(3), gamma(1), delta(1), epsilon(1). F(0) has three main subunits: a(1), b(2) and c(10-14). The alpha and beta chains form an alternating ring which encloses part of the gamma chain. F(1) is attached to F(0) by a central stalk formed by the gamma and epsilon chains, while a peripheral stalk is formed by the delta and b chains.

It localises to the cell inner membrane. Functionally, f(1)F(0) ATP synthase produces ATP from ADP in the presence of a proton or sodium gradient. F-type ATPases consist of two structural domains, F(1) containing the extramembraneous catalytic core and F(0) containing the membrane proton channel, linked together by a central stalk and a peripheral stalk. During catalysis, ATP synthesis in the catalytic domain of F(1) is coupled via a rotary mechanism of the central stalk subunits to proton translocation. In terms of biological role, component of the F(0) channel, it forms part of the peripheral stalk, linking F(1) to F(0). The b'-subunit is a diverged and duplicated form of b found in plants and photosynthetic bacteria. The chain is ATP synthase subunit b 2 (atpF2) from Bartonella bacilliformis (strain ATCC 35685 / KC583 / Herrer 020/F12,63).